A 507-amino-acid polypeptide reads, in one-letter code: MVTIRADEISNIIRERIQHYTKKINILNTGTVLQVGDGIVRIYGLDEVMAGELIEFEEGTKGIALNLESKNVGVVLMGDGLRIKEGGSVKATGRIAQVPVGDAYLGRVINALATPIDGRGEILSSEFRLIDSPAPGILSRRSIYEPLQTGLIAIDSMIPIGRGQRELIIGDRQTGKTAVATDTILNQQSQNIICVYVAIGQKASSVAQVVTTLQEKGALQYTIVVAEMADSAATLQYLAPYTGAALAEYFMYKERHTLIIYDDLSKQAQAYRQMSLLLRRPPGREAYPGDVFYLHSRLLERAAKLSSKLGEGSMTALPIVETQSGDVSAYIPTNVISITDGQIFLSADLFNAGLRPAINVGISVSRVGSAAQIKAMKQVASKLKLELAQFAELEAFAQFASDLDQASQNLLARGQRLRELLKQSQSAPLTTAEQIMSIYAGINGYLDSLELGQIGKFLRELSDYLKVNKPRFQEIINSTKTFTEEAEAILKDTIPSEKDRFLREGKI.

An ATP-binding site is contributed by 170-177 (GDRQTGKT).

Belongs to the ATPase alpha/beta chains family. F-type ATPases have 2 components, CF(1) - the catalytic core - and CF(0) - the membrane proton channel. CF(1) has five subunits: alpha(3), beta(3), gamma(1), delta(1), epsilon(1). CF(0) has four main subunits: a, b, b' and c.

The protein localises to the plastid membrane. It catalyses the reaction ATP + H2O + 4 H(+)(in) = ADP + phosphate + 5 H(+)(out). Its function is as follows. Produces ATP from ADP in the presence of a proton gradient across the membrane. The alpha chain is a regulatory subunit. The polypeptide is ATP synthase subunit alpha, plastid (Cuscuta obtusiflora (Peruvian dodder)).